We begin with the raw amino-acid sequence, 303 residues long: N-acetyl-D-glucosamine kinase (303 aa).

ATP contacts are provided by residues 4 to 11 and 133 to 140; these read GFDIGGTK and GVGGGLVL. Residues H157, C177, C179, and C184 each contribute to the Zn(2+) site.

This sequence belongs to the ROK (NagC/XylR) family. NagK subfamily.

The enzyme catalyses N-acetyl-D-glucosamine + ATP = N-acetyl-D-glucosamine 6-phosphate + ADP + H(+). It functions in the pathway cell wall biogenesis; peptidoglycan recycling. Catalyzes the phosphorylation of N-acetyl-D-glucosamine (GlcNAc) derived from cell-wall degradation, yielding GlcNAc-6-P. This Citrobacter koseri (strain ATCC BAA-895 / CDC 4225-83 / SGSC4696) protein is N-acetyl-D-glucosamine kinase.